A 1039-amino-acid polypeptide reads, in one-letter code: Kinesin-like protein KIN-5B (1039 aa).

Residues 48–390 (NVQVILRCKP…LDYAYRAKNI (343 aa)) form the Kinesin motor domain. Position 134 to 141 (134 to 141 (GQTGTGKT)) interacts with ATP. The tract at residues 1008–1039 (TLSEEHTSLEKISTKQGLGEANNRTPFLEVNK) is disordered. Basic and acidic residues predominate over residues 1010–1020 (SEEHTSLEKIS).

It belongs to the TRAFAC class myosin-kinesin ATPase superfamily. Kinesin family. KIN-5/BimC subfamily.

Its subcellular location is the cytoplasm. It localises to the cytoskeleton. It is found in the spindle. Responsible for microtubule translocation. May be important for the organization of phragmoplast-specific arrays of microtubules. Plays an essential role in stabilizing the mitotic spindle. Required during mitotic cytokinesis. The protein is Kinesin-like protein KIN-5B of Arabidopsis thaliana (Mouse-ear cress).